A 72-amino-acid chain; its full sequence is Neuropeptide IMFamide (72 aa).

Positions Met-1–Ala-24 are cleaved as a signal peptide. Phe-36 is modified (phenylalanine amide). Residues Gly-40–Lys-72 constitute a propeptide that is removed on maturation.

As to expression, expressed in corpora cardiaca (CC), corpora allata (CA), antennal lobe (AL) and gnathal ganglion (GNG) (at protein level). Expression detected in only a few animals (at protein level).

The protein resides in the secreted. The chain is Neuropeptide IMFamide from Agrotis ipsilon (Black cutworm moth).